A 380-amino-acid chain; its full sequence is Queuine tRNA-ribosyltransferase (380 aa).

Asp95 (proton acceptor) is an active-site residue. Substrate is bound by residues 95–99 (DSGGF), Asp149, Gln192, and Gly219. An RNA binding region spans residues 250 to 256 (GVGSADA). Asp269 serves as the catalytic Nucleophile. The tract at residues 274–278 (TRIAR) is RNA binding; important for wobble base 34 recognition. Positions 307, 309, 312, and 338 each coordinate Zn(2+).

This sequence belongs to the queuine tRNA-ribosyltransferase family. In terms of assembly, homodimer. Within each dimer, one monomer is responsible for RNA recognition and catalysis, while the other monomer binds to the replacement base PreQ1. The cofactor is Zn(2+).

The enzyme catalyses 7-aminomethyl-7-carbaguanine + guanosine(34) in tRNA = 7-aminomethyl-7-carbaguanosine(34) in tRNA + guanine. Its pathway is tRNA modification; tRNA-queuosine biosynthesis. Catalyzes the base-exchange of a guanine (G) residue with the queuine precursor 7-aminomethyl-7-deazaguanine (PreQ1) at position 34 (anticodon wobble position) in tRNAs with GU(N) anticodons (tRNA-Asp, -Asn, -His and -Tyr). Catalysis occurs through a double-displacement mechanism. The nucleophile active site attacks the C1' of nucleotide 34 to detach the guanine base from the RNA, forming a covalent enzyme-RNA intermediate. The proton acceptor active site deprotonates the incoming PreQ1, allowing a nucleophilic attack on the C1' of the ribose to form the product. After dissociation, two additional enzymatic reactions on the tRNA convert PreQ1 to queuine (Q), resulting in the hypermodified nucleoside queuosine (7-(((4,5-cis-dihydroxy-2-cyclopenten-1-yl)amino)methyl)-7-deazaguanosine). This is Queuine tRNA-ribosyltransferase from Lactiplantibacillus plantarum (strain ATCC BAA-793 / NCIMB 8826 / WCFS1) (Lactobacillus plantarum).